The sequence spans 245 residues: Fumarate reductase iron-sulfur subunit (245 aa).

Residues 17-98 (PQSAVNKPHF…NGVITLMPMP (82 aa)) enclose the 2Fe-2S ferredoxin-type domain. [2Fe-2S] cluster-binding residues include Cys60, Cys65, Cys68, and Cys80. The 4Fe-4S ferredoxin-type domain occupies 145–174 (AQEVFELDRCIECGCCIASCGTKLMRPNFI). 3 residues coordinate [4Fe-4S] cluster: Cys154, Cys157, and Cys160. Residues Cys164, Cys211, and Cys217 each contribute to the [3Fe-4S] cluster site. Cys221 is a binding site for [4Fe-4S] cluster.

The protein belongs to the succinate dehydrogenase/fumarate reductase iron-sulfur protein family. As to quaternary structure, part of an enzyme complex containing three subunits: a flavoprotein (frdA), an iron-sulfur protein (frdB), and diheme cytochrome b (frdC). [2Fe-2S] cluster is required as a cofactor. It depends on [3Fe-4S] cluster as a cofactor. [4Fe-4S] cluster serves as cofactor.

The enzyme catalyses a menaquinone + succinate = a menaquinol + fumarate. The polypeptide is Fumarate reductase iron-sulfur subunit (frdB) (Helicobacter pylori (strain J99 / ATCC 700824) (Campylobacter pylori J99)).